Here is a 110-residue protein sequence, read N- to C-terminus: UPF0367 protein Syncc9605_2376 (110 aa).

This sequence belongs to the UPF0367 family.

The protein is UPF0367 protein Syncc9605_2376 of Synechococcus sp. (strain CC9605).